Reading from the N-terminus, the 138-residue chain is Basic phospholipase A2 sistruxin B (138 aa).

The signal sequence occupies residues 1–16 (MRALWIVAVLLVGVEG). Cystine bridges form between cysteine 42/cysteine 131, cysteine 44/cysteine 60, cysteine 59/cysteine 111, cysteine 65/cysteine 138, cysteine 66/cysteine 104, cysteine 73/cysteine 97, and cysteine 91/cysteine 102. Positions 43, 45, and 47 each coordinate Ca(2+). The active site involves histidine 63. Position 64 (aspartate 64) interacts with Ca(2+). Aspartate 105 is a catalytic residue.

Heterodimer of an acidic subunit and a basic chain. The acidic subunit is non-toxic, without enzymatic activity and comprises 3 peptides that are cross-linked by 7 disulfide bridges. The basic subunit is toxic, has phospholipase A2 activity and is composed of a single chain. Requires Ca(2+) as cofactor. In terms of tissue distribution, expressed by the venom gland.

Its subcellular location is the secreted. It carries out the reaction a 1,2-diacyl-sn-glycero-3-phosphocholine + H2O = a 1-acyl-sn-glycero-3-phosphocholine + a fatty acid + H(+). In terms of biological role, snake venom phospholipase A2 (PLA2) that shows presynaptic neurotoxicity. PLA2 catalyzes the calcium-dependent hydrolysis of the 2-acyl groups in 3-sn-phosphoglycerides. The sequence is that of Basic phospholipase A2 sistruxin B from Sistrurus tergeminus (Western massasauga).